Here is a 106-residue protein sequence, read N- to C-terminus: Thioredoxin (106 aa).

The 105-residue stretch at 2–106 (SHYIELTEEN…LKEQLNKLLG (105 aa)) folds into the Thioredoxin domain. Cysteines 30 and 33 form a disulfide.

Belongs to the thioredoxin family.

Its function is as follows. Participates in various redox reactions through the reversible oxidation of its active center dithiol to a disulfide and catalyzes dithiol-disulfide exchange reactions. This Helicobacter pylori (strain J99 / ATCC 700824) (Campylobacter pylori J99) protein is Thioredoxin (trxA).